A 902-amino-acid polypeptide reads, in one-letter code: Probable polyribonucleotide nucleotidyltransferase 1, chloroplastic (902 aa).

A chloroplast-targeting transit peptide spans 1 to 66 (MLATPGALHH…RRRAAGARVR (66 aa)). Residues 44–53 (VAASASTSRR) show a composition bias toward low complexity. Residues 44–93 (VAASASTSRRGGARRRAAGARVRASVGEEAPPVVTEEASTSGGPTKFSTK) form a disordered region. Polar residues predominate over residues 80-91 (EASTSGGPTKFS). The 61-residue stretch at 693-753 (PLIHVMKVKP…SSLEKSKAII (61 aa)) folds into the KH domain. An S1 motif domain is found at 763–832 (GEIYRNCEIK…DKGQLRLSSR (70 aa)). The tract at residues 833 to 902 (ALLPDANQES…ASQGSEMGTE (70 aa)) is disordered. The span at 839–850 (NQESSSKQQAGG) shows a compositional bias: polar residues. Positions 852-862 (TREKAPQKDNL) are enriched in basic and acidic residues. Over residues 877–888 (EASTAENNATAS) the composition is skewed to low complexity.

This sequence belongs to the polyribonucleotide nucleotidyltransferase family.

The protein localises to the plastid. Its subcellular location is the chloroplast. The enzyme catalyses RNA(n+1) + phosphate = RNA(n) + a ribonucleoside 5'-diphosphate. Functionally, involved in the metabolism of all major classes of plastid RNAs. Required for efficient 3'-end processing of mRNAs and 3'-end maturation of rRNA transcripts, but is not sufficient to mediate their degradation. Mediates tRNA degradation. May function as a poly(A) mRNA 3'-5' degrading phosphorylase. The protein is Probable polyribonucleotide nucleotidyltransferase 1, chloroplastic (PNP1) of Oryza sativa subsp. japonica (Rice).